We begin with the raw amino-acid sequence, 350 residues long: Protein Wnt-8b (350 aa).

The N-terminal stretch at 1–21 (MFLMKPVCVLLVTCVLHRSHA) is a signal peptide. C53 and C64 form a disulfide bridge. Residue N102 is glycosylated (N-linked (GlcNAc...) asparagine). Cystine bridges form between C103/C111, C113/C131, C179/C193, C181/C188, C255/C293, C271/C286, C290/C332, C308/C323, C310/C320, and C315/C316. The O-palmitoleoyl serine moiety is linked to residue S185. Residue N258 is glycosylated (N-linked (GlcNAc...) asparagine).

The protein belongs to the Wnt family. Post-translationally, palmitoleoylation is required for efficient binding to frizzled receptors. Depalmitoleoylation leads to Wnt signaling pathway inhibition. Proteolytic processing by TIKI1 and TIKI2 promotes oxidation and formation of large disulfide-bond oligomers, leading to inactivation of WNT8B.

Its subcellular location is the secreted. The protein resides in the extracellular space. It localises to the extracellular matrix. In terms of biological role, ligand for members of the frizzled family of seven transmembrane receptors. May play an important role in the development and differentiation of certain forebrain structures, notably the hippocampus. The protein is Protein Wnt-8b (Wnt8b) of Mus musculus (Mouse).